Consider the following 273-residue polypeptide: SUMO-1 cysteine protease S273R (273 aa).

Residues His168 and Asn187 contribute to the active site. Gln226 contacts substrate. Cys232 functions as the Nucleophile in the catalytic mechanism.

The protein belongs to the peptidase C63 family.

The protein resides in the host cytoplasm. Its subcellular location is the virion. Functionally, cysteine protease that plays several role during infection including processing of the structural polyprotein or inhibition of the host immune response. Catalyzes the maturation of the pp220 and pp62 polyprotein precursors into core-shell proteins. Plays a role in the disruption of host pyroptosis via specific cleavage of gasdermin D/GSDMD. In addition, strongly decreases the host cGAS-STING signaling by targeting IKBKE via its enzymatic activity. Also impairs host FOXJ1-mediated antiviral effect via degradation of FOXJ1. In Ornithodoros (relapsing fever ticks), this protein is SUMO-1 cysteine protease S273R.